Consider the following 317-residue polypeptide: Olfactory receptor 10AD1 (317 aa).

Topologically, residues 1–25 are extracellular; it reads MLRNGSIVTEFILVGFQQSSTSTRA. An N-linked (GlcNAc...) asparagine glycan is attached at asparagine 4. A helical transmembrane segment spans residues 26-46; the sequence is LLFALFLALYSLTMAMNGLII. At 47–55 the chain is on the cytoplasmic side; that stretch reads FITSWTDPK. Residues 56 to 76 form a helical membrane-spanning segment; the sequence is LNSPMYFFLGHLSLLDVCFIT. The Extracellular portion of the chain corresponds to 77 to 100; that stretch reads TTIPQMLIHLVVRDHIVSFVCCMT. A disulfide bridge connects residues cysteine 98 and cysteine 190. The helical transmembrane segment at 101 to 121 threads the bilayer; it reads QMYFVFCVGVAECILLAFMAY. Residues 122 to 140 lie on the Cytoplasmic side of the membrane; sequence DRYVAICYPLNYVPIISQK. A helical transmembrane segment spans residues 141-161; the sequence is VCVRLVGTAWFFGLINGIFLE. Residues 162–198 are Extracellular-facing; the sequence is YISFREPFRRDNHIESFFCEAPIVIGLSCGDPQFSLW. A helical membrane pass occupies residues 199–218; sequence AIFADAIVVILSPMVLTVTS. The Cytoplasmic segment spans residues 219-238; sequence YVHILATILSKASSSGRGKT. The chain crosses the membrane as a helical span at residues 239 to 259; sequence FSTCASHLTVVIFLYTSAMFS. At 260–272 the chain is on the extracellular side; the sequence is YMNPHSTHGPDKD. The chain crosses the membrane as a helical span at residues 273–293; it reads KPFSLLYTIITPMCNPIIYSF. The Cytoplasmic segment spans residues 294-317; that stretch reads RNKEIKEAMVRALGRTRLAQPQSV.

It belongs to the G-protein coupled receptor 1 family.

Its subcellular location is the cell membrane. Functionally, odorant receptor. This Homo sapiens (Human) protein is Olfactory receptor 10AD1 (OR10AD1).